The sequence spans 133 residues: Capsid protein (133 aa).

Belongs to the Leviviricetes capsid protein family. As to quaternary structure, homodimer. The homodimers binds to the viral RNA via an operator hairpin, but also to many other RNA sequences in the viral genome; this interaction probably shifts the virus from the replicative to the assembly phase and ensures specific encapsidation of the viral genome. Interacts with the maturation protein A2.

The protein resides in the virion. Functionally, capsid protein self-assembles to form an icosahedral capsid with a T=3 symmetry, about 26 nm in diameter, and consisting of 89 capsid proteins dimers (178 capsid proteins). Involved in viral genome encapsidation through the interaction between a capsid protein dimer and the multiple packaging signals present in the RNA genome. Binding of the capsid proteins to the viral RNA induces a conformational change required for efficient T=3 shell formation. The capsid also contains 1 copy of the A2 maturation protein. In terms of biological role, acts as a translational repressor of viral replicase synthesis late in infection. This latter function is the result of capsid protein interaction with an RNA hairpin which contains the replicase ribosome-binding site. The chain is Capsid protein from Escherichia virus Qbeta (Bacteriophage Q-beta).